Consider the following 560-residue polypeptide: Mitochondria-eating protein (560 aa).

The tract at residues 1–294 (MADNLRKLVS…SHSRNHSRSR (294 aa)) is interaction with YWHAG/14-3-3 protein gamma. Residues S13, S85, S156, and S159 each carry the phosphoserine modification. 2 coiled-coil regions span residues 118–186 (DRNI…SRHR) and 223–248 (DYEK…LQGR). Disordered stretches follow at residues 178–217 (QAQE…AQRK) and 243–316 (SVLQ…AKLS). Over residues 181 to 209 (EESRHRPPEHRSSEKRGSERRRVEPRGAD) the composition is skewed to basic and acidic residues. Low complexity predominate over residues 248-262 (RSTRSRSPSPASCSR). The segment covering 263 to 293 (SRSHSHSRSRSHSHSRSGSHSRSHSRNHSRS) has biased composition (basic residues). The span at 300–310 (TAVSGVRSPSP) shows a compositional bias: polar residues. Phosphoserine occurs at positions 307, 309, and 531.

Belongs to the MIEAP family. In terms of assembly, interacts (via coiled-coil domains) with BNIP3L (via BH3 domain). Interacts (via coiled-coil domains) with BNIP3 (via BH3 domain). Interacts with YWHAG/14-3-3 protein gamma; a protein that also plays a role in MALM.

The protein localises to the cytoplasm. The protein resides in the cytosol. Its subcellular location is the mitochondrion outer membrane. It is found in the mitochondrion matrix. Its function is as follows. Key regulator of mitochondrial quality that mediates the repairing or degradation of unhealthy mitochondria in response to mitochondrial damage. Mediator of mitochondrial protein catabolic process (also named MALM) by mediating the degradation of damaged proteins inside mitochondria by promoting the accumulation in the mitochondrial matrix of hydrolases that are characteristic of the lysosomal lumen. Also involved in mitochondrion degradation of damaged mitochondria by promoting the formation of vacuole-like structures (named MIV), which engulf and degrade unhealthy mitochondria by accumulating lysosomes. The physical interaction of SPATA18/MIEAP, BNIP3 and BNIP3L/NIX at the mitochondrial outer membrane regulates the opening of a pore in the mitochondrial double membrane in order to mediate the translocation of lysosomal proteins from the cytoplasm to the mitochondrial matrix. Binds cardiolipin. May form molecular condensates (non-membrane-bounded organelles) within mitochondria that compartmentalize and promote cardiolipin metabolism. This chain is Mitochondria-eating protein (SPATA18), found in Sus scrofa (Pig).